The following is a 96-amino-acid chain: Co-chaperonin GroES (96 aa).

It belongs to the GroES chaperonin family. As to quaternary structure, heptamer of 7 subunits arranged in a ring. Interacts with the chaperonin GroEL.

Its subcellular location is the cytoplasm. Its function is as follows. Together with the chaperonin GroEL, plays an essential role in assisting protein folding. The GroEL-GroES system forms a nano-cage that allows encapsulation of the non-native substrate proteins and provides a physical environment optimized to promote and accelerate protein folding. GroES binds to the apical surface of the GroEL ring, thereby capping the opening of the GroEL channel. In Shewanella pealeana (strain ATCC 700345 / ANG-SQ1), this protein is Co-chaperonin GroES.